Reading from the N-terminus, the 217-residue chain is Chorionic somatomammotropin hormone 1 (217 aa).

The N-terminal stretch at 1-26 (MAPGSRTSLLLAFALLCLPWLQEAGA) is a signal peptide. Histidine 44 is a binding site for Zn(2+). Cysteine 79 and cysteine 191 are joined by a disulfide. A Zn(2+)-binding site is contributed by glutamate 200. Cysteine 208 and cysteine 215 are oxidised to a cystine.

This sequence belongs to the somatotropin/prolactin family. Can be found in a monomeric as well as dimeric form.

It is found in the secreted. In terms of biological role, produced only during pregnancy and is involved in stimulating lactation, fetal growth and metabolism. Does not interact with GHR but only activates PRLR through zinc-induced dimerization. The polypeptide is Chorionic somatomammotropin hormone 1 (CSH1) (Homo sapiens (Human)).